We begin with the raw amino-acid sequence, 694 residues long: Protein NPGR1 (694 aa).

Residues 12–40 (FEDQPGSPESLATRDFSASGLSSRNGGGD) form a disordered region. 9 TPR repeats span residues 32 to 65 (LSSRNGGGDWDSKLEDIQVDEAESTLKEALSLNY), 66 to 101 (EEARALLGRLEYQRGNFDAALQVFKGIDIKVLTPRI), 135 to 168 (LEAILLKARSLEELGSYKEAAEECKIILDVVENA), 188 to 221 (QKALELLPLLWKKAGNHHETIASYRRALSRPWNL), 307 to 340 (GERWYLLSLCYSAAGIDKAAINLLKMALGPSESR), 551 to 584 (TEAWQDLASVYGKLGSWSDAETCLEKARSMCYYS), 585 to 618 (PRGWNETGLCLEAKSLHEEALISFFLSLSIEPDH), 620 to 654 (PSIVSIAEVMMKSGDESLPTAKSFLMNALRLDPRN), and 655 to 688 (HDAWMKLGHVAKKQGLSQQAAEFYQAAYELELSA).

Interacts with calmodulin in a calcium-dependent manner. In terms of tissue distribution, expressed in pollen, flowers, fruits and leaves.

This is Protein NPGR1 from Arabidopsis thaliana (Mouse-ear cress).